Reading from the N-terminus, the 342-residue chain is Inositol-tetrakisphosphate 1-kinase 5 (342 aa).

The 1D-myo-inositol 1,3,4-trisphosphate site is built by lysine 25 and lysine 67. Residues arginine 102 and lysine 154 each coordinate ATP. Histidine 165 and lysine 197 together coordinate 1D-myo-inositol 1,3,4-trisphosphate. ATP is bound by residues 186 to 197 and serine 212; that span reads QEFVNHGGVIFK. Residues aspartate 283, aspartate 298, and asparagine 300 each coordinate Mg(2+). Position 300 (asparagine 300) interacts with 1D-myo-inositol 1,3,4-trisphosphate.

It belongs to the ITPK1 family. Monomer. The cofactor is Mg(2+). Expressed in roots, leaves, flowers, anthers and embryos.

It catalyses the reaction 1D-myo-inositol 3,4,5,6-tetrakisphosphate + ATP = 1D-myo-inositol 1,3,4,5,6-pentakisphosphate + ADP + H(+). It carries out the reaction 1D-myo-inositol 1,3,4-trisphosphate + ATP = 1D-myo-inositol 1,3,4,5-tetrakisphosphate + ADP + H(+). The enzyme catalyses 1D-myo-inositol 1,3,4-trisphosphate + ATP = 1D-myo-inositol 1,3,4,6-tetrakisphosphate + ADP + H(+). In terms of biological role, kinase that can phosphorylate various inositol polyphosphate such as Ins(3,4,5,6)P4 or Ins(1,3,4)P3 and participates in phytic acid biosynthesis in developing seeds. Phytic acid is the primary storage form of phosphorus in cereal grains and other plant seeds. In Oryza sativa subsp. japonica (Rice), this protein is Inositol-tetrakisphosphate 1-kinase 5 (ITPK5).